Here is a 559-residue protein sequence, read N- to C-terminus: Transcription activator of gluconeogenesis ERT1-2 (559 aa).

The zn(2)-C6 fungal-type DNA-binding region spans 23–51 (CIHCQRTHLTCDNNRPCERCVARGFADTC). 3 disordered regions span residues 63–159 (DDKE…TPSQ), 231–263 (SNSL…TPSA), and 329–349 (AGQP…DSPS). 2 stretches are compositionally biased toward low complexity: residues 139–159 (QGPQ…TPSQ) and 231–244 (SNSL…QSPN). Over residues 245-260 (THSPHNQDQPTPQAAT) the composition is skewed to polar residues. Residues 440-512 (ALLEYQKFIS…ELFSRIAFGD (73 aa)) enclose the PAS domain.

The protein belongs to the ERT1/acuK family.

Its subcellular location is the nucleus. Its function is as follows. Transcription factor which regulates nonfermentable carbon utilization. Activator of gluconeogenetic genes. In Yarrowia lipolytica (strain CLIB 122 / E 150) (Yeast), this protein is Transcription activator of gluconeogenesis ERT1-2 (ERT1-2).